A 241-amino-acid chain; its full sequence is MSGASARSLGKGSAPPGPVPEGQIRVYSMRFCPFAQRTLMVLKAKGIRHEIININLKNKPEWFFEKNPFGLVPVLENTQGHLITESVITCEYLDEAYPEKKLFPDDPYEKACQKMTFELFSKVPSLVTSFIRAKRKEDHPGIKEELKKEFSKLEEAMANKRTAFFGGNSLSMIDYLIWPWFQRLEALELNECIDHTPKLKLWMATMQEDPVASSHFIDAKTYRDYLSLYLQDSPEACDYGL.

Ser-2 bears the N-acetylserine mark. Residues 22–101 (GQIRVYSMRF…YLDEAYPEKK (80 aa)) enclose the GST N-terminal domain. Cys-32 (nucleophile) is an active-site residue. Lys-57 is modified (N6-acetyllysine). Glutathione contacts are provided by residues Lys-59, Val-72, and 85-86 (ES). The GST C-terminal domain occupies 106–228 (DPYEKACQKM…AKTYRDYLSL (123 aa)). Ser-129 carries the post-translational modification Phosphoserine. N6-acetyllysine occurs at positions 143, 148, and 152.

It belongs to the GST superfamily. Omega family. As to quaternary structure, homodimer.

The protein localises to the cytoplasm. The protein resides in the cytosol. It catalyses the reaction RX + glutathione = an S-substituted glutathione + a halide anion + H(+). The catalysed reaction is L-dehydroascorbate + 2 glutathione = glutathione disulfide + L-ascorbate. The enzyme catalyses methylarsonate + 2 glutathione + H(+) = methylarsonous acid + glutathione disulfide + H2O. Its function is as follows. Exhibits glutathione-dependent thiol transferase and dehydroascorbate reductase activities. Has S-(phenacyl)glutathione reductase activity. Also has glutathione S-transferase activity. Participates in the biotransformation of inorganic arsenic and reduces monomethylarsonic acid (MMA) and dimethylarsonic acid. The chain is Glutathione S-transferase omega-1 (Gsto1) from Rattus norvegicus (Rat).